The following is a 40-amino-acid chain: Natriuretic peptide PpNP-b (40 aa).

The propeptide occupies 1-8 (SGSKTANI). An intrachain disulfide couples Cys12 to Cys28. Residues 20-40 (IGTTSGMGCGRPRPKPTPGGS) form a disordered region.

This sequence belongs to the natriuretic peptide family. In terms of tissue distribution, expressed by the venom gland.

The protein resides in the secreted. Functionally, snake venom natriuretic peptide that targets both NPR1 and NPR2. Exhibits hypotensive and vasodepressor activities. This Pseudechis porphyriacus (Red-bellied black snake) protein is Natriuretic peptide PpNP-b.